Here is a 433-residue protein sequence, read N- to C-terminus: Tol-Pal system protein TolB (433 aa).

A signal peptide spans 1–26 (MNKLRLFRSFFAFLLPFGMATGAAHG).

Belongs to the TolB family. In terms of assembly, the Tol-Pal system is composed of five core proteins: the inner membrane proteins TolA, TolQ and TolR, the periplasmic protein TolB and the outer membrane protein Pal. They form a network linking the inner and outer membranes and the peptidoglycan layer.

Its subcellular location is the periplasm. Part of the Tol-Pal system, which plays a role in outer membrane invagination during cell division and is important for maintaining outer membrane integrity. This is Tol-Pal system protein TolB from Methylobacillus flagellatus (strain ATCC 51484 / DSM 6875 / VKM B-1610 / KT).